The chain runs to 159 residues: Small ribosomal subunit protein uS4 (159 aa).

The 53-residue stretch at R106–V158 folds into the S4 RNA-binding domain.

It belongs to the universal ribosomal protein uS4 family. In terms of assembly, part of the 30S ribosomal subunit. Contacts protein S5. The interaction surface between S4 and S5 is involved in control of translational fidelity.

Functionally, one of the primary rRNA binding proteins, it binds directly to 16S rRNA where it nucleates assembly of the body of the 30S subunit. Its function is as follows. With S5 and S12 plays an important role in translational accuracy. The protein is Small ribosomal subunit protein uS4 of Pyrobaculum arsenaticum (strain DSM 13514 / JCM 11321 / PZ6).